A 51-amino-acid polypeptide reads, in one-letter code: Large ribosomal subunit protein eL39 (51 aa).

Belongs to the eukaryotic ribosomal protein eL39 family.

The chain is Large ribosomal subunit protein eL39 from Methanosarcina barkeri (strain Fusaro / DSM 804).